The chain runs to 437 residues: Adenylosuccinate synthetase (437 aa).

GTP is bound by residues 12–18 and 40–42; these read GDEGKGK and GHT. Asp-13 acts as the Proton acceptor in catalysis. The Mg(2+) site is built by Asp-13 and Gly-40. IMP contacts are provided by residues 13–16, 38–41, Thr-128, Arg-142, Gln-223, Thr-238, and Arg-302; these read DEGK and NAGH. His-41 functions as the Proton donor in the catalytic mechanism. 298–304 provides a ligand contact to substrate; the sequence is TTTGRRR. Residues Arg-304, 330 to 332, and 412 to 414 contribute to the GTP site; these read KLD and SLG.

The protein belongs to the adenylosuccinate synthetase family. Homodimer. Mg(2+) is required as a cofactor.

Its subcellular location is the cytoplasm. It catalyses the reaction IMP + L-aspartate + GTP = N(6)-(1,2-dicarboxyethyl)-AMP + GDP + phosphate + 2 H(+). It participates in purine metabolism; AMP biosynthesis via de novo pathway; AMP from IMP: step 1/2. Plays an important role in the de novo pathway of purine nucleotide biosynthesis. Catalyzes the first committed step in the biosynthesis of AMP from IMP. The sequence is that of Adenylosuccinate synthetase from Prochlorococcus marinus (strain NATL1A).